Here is a 119-residue protein sequence, read N- to C-terminus: Large ribosomal subunit protein uL22c (119 aa).

The protein belongs to the universal ribosomal protein uL22 family. Part of the 50S ribosomal subunit.

Its subcellular location is the plastid. It localises to the chloroplast. Its function is as follows. This protein binds specifically to 23S rRNA. Functionally, the globular domain of the protein is located near the polypeptide exit tunnel on the outside of the subunit, while an extended beta-hairpin is found that lines the wall of the exit tunnel in the center of the 70S ribosome. The chain is Large ribosomal subunit protein uL22c (rpl22) from Chaetosphaeridium globosum (Charophycean green alga).